The primary structure comprises 233 residues: Orotidine 5'-phosphate decarboxylase (233 aa).

Residues Asp9, Lys31, Asp58–Thr67, Thr120, Arg182, Gln191, Gly211, and Arg212 contribute to the substrate site. The active-site Proton donor is the Lys60.

This sequence belongs to the OMP decarboxylase family. Type 1 subfamily. Homodimer.

The enzyme catalyses orotidine 5'-phosphate + H(+) = UMP + CO2. The protein operates within pyrimidine metabolism; UMP biosynthesis via de novo pathway; UMP from orotate: step 2/2. Its function is as follows. Catalyzes the decarboxylation of orotidine 5'-monophosphate (OMP) to uridine 5'-monophosphate (UMP). The sequence is that of Orotidine 5'-phosphate decarboxylase from Listeria monocytogenes serovar 1/2a (strain ATCC BAA-679 / EGD-e).